We begin with the raw amino-acid sequence, 859 residues long: DNA mismatch repair protein MutS (859 aa).

617–624 provides a ligand contact to ATP; it reads GPNMGGKS.

The protein belongs to the DNA mismatch repair MutS family.

This protein is involved in the repair of mismatches in DNA. It is possible that it carries out the mismatch recognition step. This protein has a weak ATPase activity. This chain is DNA mismatch repair protein MutS, found in Stutzerimonas stutzeri (strain A1501) (Pseudomonas stutzeri).